The sequence spans 290 residues: Ribosomal RNA small subunit methyltransferase A (290 aa).

S-adenosyl-L-methionine contacts are provided by Asn27, Leu29, Gly54, Glu75, Asp100, and Asn125.

The protein belongs to the class I-like SAM-binding methyltransferase superfamily. rRNA adenine N(6)-methyltransferase family. RsmA subfamily.

The protein resides in the cytoplasm. It carries out the reaction adenosine(1518)/adenosine(1519) in 16S rRNA + 4 S-adenosyl-L-methionine = N(6)-dimethyladenosine(1518)/N(6)-dimethyladenosine(1519) in 16S rRNA + 4 S-adenosyl-L-homocysteine + 4 H(+). Functionally, specifically dimethylates two adjacent adenosines (A1518 and A1519) in the loop of a conserved hairpin near the 3'-end of 16S rRNA in the 30S particle. May play a critical role in biogenesis of 30S subunits. In Streptococcus sanguinis (strain SK36), this protein is Ribosomal RNA small subunit methyltransferase A.